The chain runs to 963 residues: Glycine dehydrogenase (decarboxylating) (963 aa).

Lys707 is modified (N6-(pyridoxal phosphate)lysine).

The protein belongs to the GcvP family. As to quaternary structure, the glycine cleavage system is composed of four proteins: P, T, L and H. Pyridoxal 5'-phosphate is required as a cofactor.

The catalysed reaction is N(6)-[(R)-lipoyl]-L-lysyl-[glycine-cleavage complex H protein] + glycine + H(+) = N(6)-[(R)-S(8)-aminomethyldihydrolipoyl]-L-lysyl-[glycine-cleavage complex H protein] + CO2. The glycine cleavage system catalyzes the degradation of glycine. The P protein binds the alpha-amino group of glycine through its pyridoxal phosphate cofactor; CO(2) is released and the remaining methylamine moiety is then transferred to the lipoamide cofactor of the H protein. This is Glycine dehydrogenase (decarboxylating) from Dechloromonas aromatica (strain RCB).